We begin with the raw amino-acid sequence, 365 residues long: Flagellar P-ring protein (365 aa).

The first 20 residues, 1 to 20 (MKLPHFFVLAALVLSGAAHA), serve as a signal peptide directing secretion.

This sequence belongs to the FlgI family. As to quaternary structure, the basal body constitutes a major portion of the flagellar organelle and consists of four rings (L,P,S, and M) mounted on a central rod.

The protein resides in the periplasm. It localises to the bacterial flagellum basal body. Its function is as follows. Assembles around the rod to form the L-ring and probably protects the motor/basal body from shearing forces during rotation. The polypeptide is Flagellar P-ring protein (Thiobacillus denitrificans (strain ATCC 25259 / T1)).